The following is an 863-amino-acid chain: MFSSVFKAIFGTKNDREVKKYLKRVAQINALESKYQNLSDDELKQKFIDFKTQIQKEEKTLDQILNDVFAIVREVGKRTLNMRHFDVQLIGGMVLHEGKIAEMKTGEGKTLVATLPVVLNAMSGKGVHVVTVNDYLAKRDAEQMSAIYNFLGFSVGVILSEQNSDEAHKKAYECDITYGTNNEFGFDYLRDNMKFSKLEKVQREHHFVIVDEVDSILIDEARTPLIISGPTNRTLDGYIKANEVAKQMQKGQAATTPQELPSGDFVVDEKNRTIMITEAGISKAEKLFGVENLYSLDNAILAHQLDQALKAHNLFEKDVHYVLRDKEVVIVDEFTGRLSEGRRFSDGLHQALEAKENVKIQEESQTLADITFQNYFRMYKKLAGMTGTAQTEATEFSQIYNLDVVSIPTNIPVARIDKDDLIYKTQEEKFKAVIEEIKKANAKGQPVLVGTASIERSEVFHNMLVKERIPHHVLNAKNHEQEALIIQDAGKKGAVTIATNMAGRGVDIKIDDEVKALGGLYIIGTERHESRRIDNQLRGRAGRQGDPGVSRFYLSLEDNLLRIFGGDRIKNIMERLGIEEGEHIESRIVTRAVENAQKKVESLHFESRKHLLEYDDVANEQRKTIYNYRNELLDEEFDLQDKILKNIAEYSNHLVSQIYLNAELEDDVKHFESLKQKVSYECNLELNEVDFKDLGVIEVENKLSEILEKVYKDKMSIIEDKEARRIERILYLQILDNLWREHLYQMDILKTGIGLRSYNQKDPLVEYKKESYNLFMELVERIKFDSLKLLFNVAFTQQQAQNFEEKSHEQNEQFLSNTTESGVNENGEAQITKVPRNSPCPCGSGKKYKECHGKSGPKKGILA.

ATP is bound by residues glutamine 88, glycine 106–threonine 110, and aspartate 507. Positions lysine 806–alanine 863 are disordered. The segment covering glutamate 812–alanine 829 has biased composition (polar residues). Cysteine 840, cysteine 842, cysteine 851, and histidine 852 together coordinate Zn(2+).

The protein belongs to the SecA family. Monomer and homodimer. Part of the essential Sec protein translocation apparatus which comprises SecA, SecYEG and auxiliary proteins SecDF-YajC and YidC. Zn(2+) serves as cofactor.

The protein resides in the cell inner membrane. Its subcellular location is the cytoplasm. The catalysed reaction is ATP + H2O + cellular proteinSide 1 = ADP + phosphate + cellular proteinSide 2.. In terms of biological role, part of the Sec protein translocase complex. Interacts with the SecYEG preprotein conducting channel. Has a central role in coupling the hydrolysis of ATP to the transfer of proteins into and across the cell membrane, serving as an ATP-driven molecular motor driving the stepwise translocation of polypeptide chains across the membrane. This chain is Protein translocase subunit SecA, found in Campylobacter lari (strain RM2100 / D67 / ATCC BAA-1060).